The chain runs to 101 residues: Urease subunit beta (101 aa).

Belongs to the urease beta subunit family. In terms of assembly, heterotrimer of UreA (gamma), UreB (beta) and UreC (alpha) subunits. Three heterotrimers associate to form the active enzyme.

The protein localises to the cytoplasm. The catalysed reaction is urea + 2 H2O + H(+) = hydrogencarbonate + 2 NH4(+). Its pathway is nitrogen metabolism; urea degradation; CO(2) and NH(3) from urea (urease route): step 1/1. The protein is Urease subunit beta of Burkholderia ambifaria (strain MC40-6).